We begin with the raw amino-acid sequence, 417 residues long: SNF1 protein kinase subunit beta-3 (417 aa).

Residues 1–12 (MAGDNPENKDAS) show a composition bias toward basic and acidic residues. Positions 1–37 (MAGDNPENKDASMLDVSDAASNTTINGKHSADSTNEA) are disordered. A phosphoserine mark is found at serine 12, serine 21, serine 44, and serine 135. Polar residues predominate over residues 19 to 37 (AASNTTINGKHSADSTNEA). 2 disordered regions span residues 64–155 (SSLI…VEGK) and 250–269 (GNEP…DDSK). The segment covering 118–136 (TGNTLQKMDYQPSQQPDSL) has biased composition (polar residues). The segment covering 137-149 (QNQGFQQQQEQQQ) has biased composition (low complexity). Residues 152 to 342 (VEGKKGRAMM…DQQQNNHQNM (191 aa)) form a kinase-interacting sequence (KIS); required for interaction with SNF1 region. The segment covering 257 to 269 (LAEKKANHVDDSK) has biased composition (basic and acidic residues). Phosphoserine is present on residues serine 276 and serine 279. The interval 343–417 (AWLTPPQLPP…VTQILYTPLQ (75 aa)) is association with SNF1 kinase complex (ASC) domain; required for interaction with SNF4.

It belongs to the 5'-AMP-activated protein kinase beta subunit family. As to quaternary structure, component of the SNF1 kinase complex, a heterotrimeric complex composed of the catalytic alpha subunit SNF1, one of the three related beta subunits SIP1, SIP2 or GAL83, and the regulatory gamma subunit SNF4. The beta subunit serves as a bridge between the catalytic and the regulatory subunit. Interacts (via KIS domain) with SNF1. Interacts (via ASC domain) with SNF4. Interacts with REE1. Post-translationally, phosphorylated by SNF1 in vitro.

Its subcellular location is the cytoplasm. The protein resides in the nucleus. In terms of biological role, beta subunit of the SNF1 kinase complex, which is required for transcriptional, metabolic, and developmental adaptations in response to glucose limitation. Has a structural role, mediating heterotrimer formation, and a regulatory role, defining carbon source-regulated subcellular location and substrate specificity of the SNF1 kinase complex. Promotes the relocalization of the SNF1 kinase complex to the nucleus upon shift to nonfermentable carbon sources. The polypeptide is SNF1 protein kinase subunit beta-3 (GAL83) (Saccharomyces cerevisiae (strain ATCC 204508 / S288c) (Baker's yeast)).